The primary structure comprises 91 residues: Small ribosomal subunit protein bS20 (91 aa).

The interval 1–25 (MANSPSAKKRAKQAEKRRSHNASLR) is disordered. Basic residues predominate over residues 7 to 20 (AKKRAKQAEKRRSH).

Belongs to the bacterial ribosomal protein bS20 family.

Binds directly to 16S ribosomal RNA. The chain is Small ribosomal subunit protein bS20 from Azotobacter vinelandii (strain DJ / ATCC BAA-1303).